The following is a 71-amino-acid chain: Small ribosomal subunit protein bS21 (71 aa).

It belongs to the bacterial ribosomal protein bS21 family.

This chain is Small ribosomal subunit protein bS21, found in Buchnera aphidicola subsp. Cinara cedri (strain Cc).